The sequence spans 258 residues: MRLSSSPPRGPQQLSSFGSVDWLSQSSCSGPTHTPRPADFSLGSLPGPGQTSGAREPPQAVSIKEAAGSSNLPAPERTMAGLSKEPNTLRAPRVRTAFTMEQVRTLEGVFQHHQYLSPLERKRLAREMQLSEVQIKTWFQNRRMKHKRQMQDPQLHSPFSGSLHAPPAFYSTSSGLANGLQLLCPWAPLSGPQALMLPPGSFWGLCQVAQEALASAGASCCGQPLASHPPTPGRPSLGPALSTGPRGLCAMPQTGDAF.

Polar residues predominate over residues 1–32; the sequence is MRLSSSPPRGPQQLSSFGSVDWLSQSSCSGPT. Disordered stretches follow at residues 1–93 and 227–248; these read MRLS…RAPR and SHPPTPGRPSLGPALSTGPRGL. The segment at residues 91-150 is a DNA-binding region (homeobox); that stretch reads APRVRTAFTMEQVRTLEGVFQHHQYLSPLERKRLAREMQLSEVQIKTWFQNRRMKHKRQM.

In terms of tissue distribution, expressed in bone marrow of patients recovering from chemotherapy. Also expressed in an erythroleukemia cell line.

The protein resides in the nucleus. Functionally, may be involved in ventralization. This Homo sapiens (Human) protein is Homeobox protein VENTX (VENTX).